Reading from the N-terminus, the 327-residue chain is Aromatase (327 aa).

Cys315 contacts heme.

Belongs to the cytochrome P450 family. Heme serves as cofactor.

The protein resides in the membrane. It catalyses the reaction testosterone + 3 reduced [NADPH--hemoprotein reductase] + 3 O2 = 17beta-estradiol + formate + 3 oxidized [NADPH--hemoprotein reductase] + 4 H2O + 4 H(+). The catalysed reaction is androst-4-ene-3,17-dione + 3 reduced [NADPH--hemoprotein reductase] + 3 O2 = estrone + formate + 3 oxidized [NADPH--hemoprotein reductase] + 4 H2O + 4 H(+). Catalyzes the formation of aromatic C18 estrogens from C19 androgens. The protein is Aromatase (CYP19A1) of Coturnix japonica (Japanese quail).